The primary structure comprises 84 residues: Small ribosomal subunit protein uS15 (84 aa).

It belongs to the universal ribosomal protein uS15 family. Part of the 30S ribosomal subunit. Forms a bridge to the 50S subunit in the 70S ribosome, contacting the 23S rRNA.

In terms of biological role, one of the primary rRNA binding proteins, it binds directly to 16S rRNA where it helps nucleate assembly of the platform of the 30S subunit by binding and bridging several RNA helices of the 16S rRNA. Forms an intersubunit bridge (bridge B4) with the 23S rRNA of the 50S subunit in the ribosome. In Akkermansia muciniphila (strain ATCC BAA-835 / DSM 22959 / JCM 33894 / BCRC 81048 / CCUG 64013 / CIP 107961 / Muc), this protein is Small ribosomal subunit protein uS15.